We begin with the raw amino-acid sequence, 317 residues long: Porphobilinogen deaminase (317 aa).

Cys245 is modified (S-(dipyrrolylmethanemethyl)cysteine).

This sequence belongs to the HMBS family. Monomer. Dipyrromethane serves as cofactor.

The enzyme catalyses 4 porphobilinogen + H2O = hydroxymethylbilane + 4 NH4(+). It functions in the pathway porphyrin-containing compound metabolism; protoporphyrin-IX biosynthesis; coproporphyrinogen-III from 5-aminolevulinate: step 2/4. It participates in porphyrin-containing compound metabolism; chlorophyll biosynthesis. In terms of biological role, tetrapolymerization of the monopyrrole PBG into the hydroxymethylbilane pre-uroporphyrinogen in several discrete steps. The sequence is that of Porphobilinogen deaminase from Synechococcus sp. (strain CC9605).